A 750-amino-acid chain; its full sequence is uncharacterized protein (750 aa).

A run of 5 helical transmembrane segments spans residues 2–22, 33–53, 79–99, 116–136, and 143–163; these read FVLL…TNVI, SLIL…DIFI, LLVL…VVSL, LSIF…TIML, and IQSL…SPIA. 2 disordered regions span residues 385-461 and 571-651; these read DNKG…KKKE and NKEF…PLTA. A compositionally biased stretch (basic and acidic residues) spans 398–411; the sequence is ENTKGDDNSSEKTD. Over residues 412–424 the composition is skewed to polar residues; that stretch reads TVSVSTKLKTTAD. The segment covering 425–436 has biased composition (low complexity); it reads QSESTQMSSEST. Positions 437–451 are enriched in polar residues; that stretch reads ATGISSDPQSQGKMN. Positions 452-461 are enriched in basic and acidic residues; the sequence is NKSEEQKKKE. Over residues 618 to 629 the composition is skewed to polar residues; the sequence is DSKGNTATNSDT. The chain crosses the membrane as a helical span at residues 724-744; it reads ATIVITLFLTVVLLAIAFFFF.

It to M.pneumoniae MPN_335.

The protein localises to the cell membrane. This is an uncharacterized protein from Mycoplasma pneumoniae (strain ATCC 29342 / M129 / Subtype 1) (Mycoplasmoides pneumoniae).